The chain runs to 265 residues: MNTYAQESKLRLKTKIGADGRCVIEDNFFTPPFKLMAPFYPKDDLAEIMLLAVSPGLMKGDVQDVQLNIGPNCKLRITSQSFEKIHNTEDGFASRDMHIVVGENAFLDFAPFPLIPFENAHFKGNTTISLHSSSQLLYSEIIVAGRVARNELFKFNRLHTKISILQDEKPIYYDNTILDPKTTDMNNMCMFDGYTHYLNLVLVNCPIELSSVRECIEESEGVDGAVSEIASSHLCVKALAKGSEPLLHLREKIARLTTQTITQKI.

Belongs to the UreD family. In terms of assembly, ureH, UreF and UreG form a complex that acts as a GTP-hydrolysis-dependent molecular chaperone, activating the urease apoprotein by helping to assemble the nickel containing metallocenter of UreC. The UreE protein probably delivers the nickel.

It is found in the cytoplasm. Its function is as follows. Required for maturation of urease via the functional incorporation of the urease nickel metallocenter. This is Urease accessory protein UreH from Helicobacter pylori (strain G27).